The sequence spans 303 residues: Ribosomal protein uL3 glutamine methyltransferase (303 aa).

This sequence belongs to the protein N5-glutamine methyltransferase family. PrmB subfamily.

It carries out the reaction L-glutaminyl-[ribosomal protein uL3] + S-adenosyl-L-methionine = N(5)-methyl-L-glutaminyl-[ribosomal protein uL3] + S-adenosyl-L-homocysteine + H(+). In terms of biological role, methylates large ribosomal subunit protein uL3 on a specific glutamine residue. In Neisseria meningitidis serogroup B (strain ATCC BAA-335 / MC58), this protein is Ribosomal protein uL3 glutamine methyltransferase.